The sequence spans 336 residues: Mitochondrial thiamine pyrophosphate carrier 1 (336 aa).

Solcar repeat units lie at residues 11–98 (ISST…VNQV), 112–202 (SSGA…VKDS), and 221–323 (TKGW…SLSI). A run of 6 helical transmembrane segments spans residues 17–37 (MLCGGIAGMVSRFCIAPLDVV), 66–86 (GVTALWKGNIPAELLYVFYGA), 118–138 (FIAGATAGAGATIATYPFDLF), 177–197 (GVSSSIISIAPYMGLFFASYG), 228–244 (TAGLCAGTASKALVFPL), and 298–315 (GFLVSLIKSAPTSAITMY).

Belongs to the mitochondrial carrier (TC 2.A.29) family.

It is found in the mitochondrion inner membrane. Functionally, mitochondrial transporter that mediates uptake of thiamine pyrophosphate (ThPP) into mitochondria. The chain is Mitochondrial thiamine pyrophosphate carrier 1 (TPC1) from Yarrowia lipolytica (strain CLIB 122 / E 150) (Yeast).